The primary structure comprises 357 residues: Peptide chain release factor 1 (357 aa).

Residue Gln236 is modified to N5-methylglutamine.

The protein belongs to the prokaryotic/mitochondrial release factor family. In terms of processing, methylated by PrmC. Methylation increases the termination efficiency of RF1.

It is found in the cytoplasm. Peptide chain release factor 1 directs the termination of translation in response to the peptide chain termination codons UAG and UAA. This Mycobacterium avium (strain 104) protein is Peptide chain release factor 1.